Consider the following 435-residue polypeptide: Transcription factor tau 55 kDa subunit (435 aa).

Residues 362 to 417 form a disordered region; sequence GLLSPTEENETTNAGQSKGSSTANDPNIQIQEEDVGLPDSTNTSRDHTGDKEEVQS. Phosphoserine is present on Ser365. A compositionally biased stretch (polar residues) spans 372–391; sequence TTNAGQSKGSSTANDPNIQI. Basic and acidic residues predominate over residues 405-417; it reads SRDHTGDKEEVQS.

As to quaternary structure, component of the TFIIIC complex composed of TFC1, TFC3, TFC4, TFC6, TFC7 and TFC8. The subunits are organized in two globular domains, tauA and tauB, connected by a proteolysis-sensitive and flexible linker.

The protein resides in the nucleus. Functionally, TFIIIC mediates tRNA and 5S RNA gene activation by binding to intragenic promoter elements. Upstream of the transcription start site, TFIIIC assembles the initiation complex TFIIIB-TFIIIC-tDNA, which is sufficient for RNA polymerase III recruitment and function. Part of the tauA domain of TFIIIC that binds boxA DNA promoter sites of tRNA and similar genes. This is Transcription factor tau 55 kDa subunit (TFC7) from Saccharomyces cerevisiae (strain ATCC 204508 / S288c) (Baker's yeast).